The chain runs to 509 residues: MELKKSPDGGWGWVIVFVSFFTQFLCYGSPLAVGVLYIEWLDAFGEGKGKTAWVGSLASGVGLLASPVCSLCVSSFGARPVTIFSGFMVAGGLMLSSFAPNIYFLFFSYGIVVGLGCGLLYTATVTITCLYFDDRRGLALGLISTGSSVGLFIYAALQRMLVEFYGLDGCLLIVGALALNILACGSLMRPLQSSDCPLPKKIAPEDLPDKYSIYNEKGKNLEENINILEKSYSSEEKCRTTLANGDWKQDSLLHKNPTVTHTKEPETYKKKVAEQTYFCKQLAKRKWQLYKNYCGETVALFKNKVFSALFIAILLFDIGGFPPSLLMEDVARSSNVKEEEFIMPLISIIGIMTAVGKLLLGILADFKWINTLYLYVATLIIMGLALCAIPFAKSYVTLALLSGILGFLTGNWSIFPYVTTKTVGIEKLAHAYGILMFFAGLGNSLGPPIVGWFYDWTQTYEIAFYFSGFCVLLGGFILLLAALPSWDTCNKQLPKPAPTTFLYKVASNV.

The Cytoplasmic portion of the chain corresponds to 1–12; it reads MELKKSPDGGWG. Helical transmembrane passes span 13-33, 53-73, 80-100, 102-122, 137-157, 164-184, 305-325, 342-362, 372-392, 398-418, 433-453, and 462-482; these read WVIVFVSFFTQFLCYGSPLAV, WVGSLASGVGLLASPVCSLCV, PVTIFSGFMVAGGLMLSSFAP, IYFLFFSYGIVVGLGCGLLYT, GLALGLISTGSSVGLFIYAAL, FYGLDGCLLIVGALALNILAC, VFSALFIAILLFDIGGFPPSL, IMPLISIIGIMTAVGKLLLGI, LYLYVATLIIMGLALCAIPFA, LALLSGILGFLTGNWSIFPYV, GILMFFAGLGNSLGPPIVGWF, and IAFYFSGFCVLLGGFILLLAA. The Cytoplasmic portion of the chain corresponds to 483–509; that stretch reads LPSWDTCNKQLPKPAPTTFLYKVASNV.

It belongs to the major facilitator superfamily. Monocarboxylate porter (TC 2.A.1.13) family.

The protein resides in the cell membrane. It carries out the reaction creatine(in) = creatine(out). It catalyses the reaction (R)-carnitine(in) = (R)-carnitine(out). Extracellular pH-and Na(+)-sensitive low-affinity creatine transporter. Also functions as a pH-independent carnitine efflux transporter. The sequence is that of Monocarboxylate transporter 9 (SLC16A9) from Pongo abelii (Sumatran orangutan).